A 131-amino-acid chain; its full sequence is MSRGFGREKRLLTPRQFKAVFDSPSGKVPGRNVLLLARENDLQHPRLGLVIGKKSVKLSVERNRIKRQIRETFRHHQLELAGWDIVIIARKGLADLDNPELAKQFAKLWKRLSRNPAKTAAEPGAANNTHA.

This sequence belongs to the RnpA family. In terms of assembly, consists of a catalytic RNA component (M1 or rnpB) and a protein subunit.

It carries out the reaction Endonucleolytic cleavage of RNA, removing 5'-extranucleotides from tRNA precursor.. RNaseP catalyzes the removal of the 5'-leader sequence from pre-tRNA to produce the mature 5'-terminus. It can also cleave other RNA substrates such as 4.5S RNA. The protein component plays an auxiliary but essential role in vivo by binding to the 5'-leader sequence and broadening the substrate specificity of the ribozyme. The chain is Ribonuclease P protein component from Stutzerimonas stutzeri (strain A1501) (Pseudomonas stutzeri).